A 367-amino-acid chain; its full sequence is Uptake hydrogenase small subunit (367 aa).

A signal peptide (tat-type signal) is located at residues 1-45 (MTPTETFYEVMRRQGVTRRSFLKFCSLTATALGLGPAYTSEIAHA). The [4Fe-4S] cluster site is built by cysteine 62, cysteine 65, cysteine 160, cysteine 194, histidine 232, cysteine 235, cysteine 260, and cysteine 266. [3Fe-4S] cluster-binding residues include cysteine 275, cysteine 294, and cysteine 297.

The protein belongs to the [NiFe]/[NiFeSe] hydrogenase small subunit family. Heterodimer of a large and a small subunit. [4Fe-4S] cluster is required as a cofactor. The cofactor is [3Fe-4S] cluster. In terms of processing, predicted to be exported by the Tat system. The position of the signal peptide cleavage has been experimentally proven.

The protein localises to the cell membrane. It carries out the reaction H2 + A = AH2. Its function is as follows. This enzyme recycles the H(2) produced by nitrogenase to increase the production of ATP and to protect nitrogenase against inhibition or damage by O(2) under carbon- or phosphate-limited conditions. This Afipia carboxidovorans (strain ATCC 49405 / DSM 1227 / KCTC 32145 / OM5) (Oligotropha carboxidovorans) protein is Uptake hydrogenase small subunit (hoxS).